The chain runs to 414 residues: Serine hydroxymethyltransferase (414 aa).

Residues leucine 121 and 125 to 127 (GHL) each bind (6S)-5,6,7,8-tetrahydrofolate. Lysine 229 is modified (N6-(pyridoxal phosphate)lysine).

It belongs to the SHMT family. As to quaternary structure, homodimer. Requires pyridoxal 5'-phosphate as cofactor.

The protein resides in the cytoplasm. It carries out the reaction (6R)-5,10-methylene-5,6,7,8-tetrahydrofolate + glycine + H2O = (6S)-5,6,7,8-tetrahydrofolate + L-serine. It participates in one-carbon metabolism; tetrahydrofolate interconversion. Its pathway is amino-acid biosynthesis; glycine biosynthesis; glycine from L-serine: step 1/1. In terms of biological role, catalyzes the reversible interconversion of serine and glycine with tetrahydrofolate (THF) serving as the one-carbon carrier. This reaction serves as the major source of one-carbon groups required for the biosynthesis of purines, thymidylate, methionine, and other important biomolecules. Also exhibits THF-independent aldolase activity toward beta-hydroxyamino acids, producing glycine and aldehydes, via a retro-aldol mechanism. The sequence is that of Serine hydroxymethyltransferase from Albidiferax ferrireducens (strain ATCC BAA-621 / DSM 15236 / T118) (Rhodoferax ferrireducens).